The following is a 430-amino-acid chain: Histidine--tRNA ligase (430 aa).

Belongs to the class-II aminoacyl-tRNA synthetase family. As to quaternary structure, homodimer.

It is found in the cytoplasm. The catalysed reaction is tRNA(His) + L-histidine + ATP = L-histidyl-tRNA(His) + AMP + diphosphate + H(+). This is Histidine--tRNA ligase from Lactococcus lactis subsp. cremoris (strain MG1363).